The sequence spans 241 residues: NLP effector protein 7 (241 aa).

Residues 1–19 (MHLCALLIAAAGVLASVRA) form the signal peptide. The Conserved undecapeptide motif motif lies at 105 to 115 (AIMYAWYFPKA). The short motif at 125–131 (GSRHYWL) is the Conserved heptapeptide motif element. Asn-144 carries an N-linked (GlcNAc...) asparagine glycan.

Belongs to the Necrosis inducing protein (NPP1) family.

It is found in the secreted. Functionally, secreted effector that acts as a pathogen-associated molecular pattern (PAMP) recognized by the plant immune system. Induces necrosis in Nicotiana benthamiana leaves and can induce Phytophthora capsici resistance in Nicotiana benthamiana. Also significantly improves disease resistance of Arabidopsis thaliana to Hyaloperonospora arabidopsidis. causes an inhibition of plant growth which is typically associated with enhanced immunity when over-expressed in Arabidopsis. In Plasmopara viticola (Downy mildew of grapevine), this protein is NLP effector protein 7.